Reading from the N-terminus, the 234-residue chain is Leucyl/phenylalanyl-tRNA--protein transferase (234 aa).

Belongs to the L/F-transferase family.

The protein localises to the cytoplasm. The enzyme catalyses N-terminal L-lysyl-[protein] + L-leucyl-tRNA(Leu) = N-terminal L-leucyl-L-lysyl-[protein] + tRNA(Leu) + H(+). The catalysed reaction is N-terminal L-arginyl-[protein] + L-leucyl-tRNA(Leu) = N-terminal L-leucyl-L-arginyl-[protein] + tRNA(Leu) + H(+). It catalyses the reaction L-phenylalanyl-tRNA(Phe) + an N-terminal L-alpha-aminoacyl-[protein] = an N-terminal L-phenylalanyl-L-alpha-aminoacyl-[protein] + tRNA(Phe). In terms of biological role, functions in the N-end rule pathway of protein degradation where it conjugates Leu, Phe and, less efficiently, Met from aminoacyl-tRNAs to the N-termini of proteins containing an N-terminal arginine or lysine. The protein is Leucyl/phenylalanyl-tRNA--protein transferase of Myxococcus xanthus (strain DK1622).